Reading from the N-terminus, the 265-residue chain is Mlc titration factor A (265 aa).

Histidine 111, histidine 148, histidine 152, and glutamate 211 together coordinate Zn(2+).

This sequence belongs to the MtfA family. In terms of assembly, interacts with Mlc. The cofactor is Zn(2+).

Its subcellular location is the cytoplasm. Involved in the modulation of the activity of the glucose-phosphotransferase system (glucose-PTS). Interacts with the transcriptional repressor Mlc, preventing its interaction with DNA and leading to the modulation of expression of genes regulated by Mlc, including ptsG, which encodes the PTS system glucose-specific EIICB component. In terms of biological role, shows zinc-dependent metallopeptidase activity. This Salmonella paratyphi A (strain AKU_12601) protein is Mlc titration factor A.